We begin with the raw amino-acid sequence, 302 residues long: Proline dehydrogenase 1 (302 aa).

Substrate is bound at residue Lys95. Asp129 is a catalytic residue. 2 residues coordinate FAD: Met130 and Gln158. The active site involves Arg179. FAD contacts are provided by residues 182–184 (KGA) and 221–222 (TH). Substrate is bound at residue 283 to 284 (RR).

Belongs to the proline oxidase family. FAD is required as a cofactor.

It carries out the reaction L-proline + a quinone = (S)-1-pyrroline-5-carboxylate + a quinol + H(+). It functions in the pathway amino-acid degradation; L-proline degradation into L-glutamate; L-glutamate from L-proline: step 1/2. In terms of biological role, converts proline to delta-1-pyrroline-5-carboxylate. The sequence is that of Proline dehydrogenase 1 (fadM) from Bacillus subtilis subsp. natto.